The following is a 235-amino-acid chain: 2-C-methyl-D-erythritol 4-phosphate cytidylyltransferase (235 aa).

This sequence belongs to the IspD/TarI cytidylyltransferase family. IspD subfamily.

It carries out the reaction 2-C-methyl-D-erythritol 4-phosphate + CTP + H(+) = 4-CDP-2-C-methyl-D-erythritol + diphosphate. It functions in the pathway isoprenoid biosynthesis; isopentenyl diphosphate biosynthesis via DXP pathway; isopentenyl diphosphate from 1-deoxy-D-xylulose 5-phosphate: step 2/6. Functionally, catalyzes the formation of 4-diphosphocytidyl-2-C-methyl-D-erythritol from CTP and 2-C-methyl-D-erythritol 4-phosphate (MEP). This is 2-C-methyl-D-erythritol 4-phosphate cytidylyltransferase from Mycolicibacterium paratuberculosis (strain ATCC BAA-968 / K-10) (Mycobacterium paratuberculosis).